The following is a 193-amino-acid chain: Epididymal-specific lipocalin-12 (193 aa).

A signal peptide spans 1 to 19 (MGPWWALWLILTLPQILGG). A disulfide bridge links Cys88 with Cys193. N-linked (GlcNAc...) asparagine glycosylation is found at Asn143 and Asn172.

Belongs to the calycin superfamily. Lipocalin family. As to quaternary structure, monomer.

The protein resides in the secreted. Its function is as follows. Binds all-trans retinoic acid and may act as a retinoid carrier protein within the epididymis. May play a role in male fertility. The protein is Epididymal-specific lipocalin-12 (Lcn12) of Rattus norvegicus (Rat).